Reading from the N-terminus, the 379-residue chain is UDP-4-amino-4-deoxy-L-arabinose--oxoglutarate aminotransferase (379 aa).

At K182 the chain carries N6-(pyridoxal phosphate)lysine.

It belongs to the DegT/DnrJ/EryC1 family. ArnB subfamily. Homodimer. It depends on pyridoxal 5'-phosphate as a cofactor.

It catalyses the reaction UDP-4-amino-4-deoxy-beta-L-arabinose + 2-oxoglutarate = UDP-beta-L-threo-pentopyranos-4-ulose + L-glutamate. It participates in nucleotide-sugar biosynthesis; UDP-4-deoxy-4-formamido-beta-L-arabinose biosynthesis; UDP-4-deoxy-4-formamido-beta-L-arabinose from UDP-alpha-D-glucuronate: step 2/3. It functions in the pathway bacterial outer membrane biogenesis; lipopolysaccharide biosynthesis. Catalyzes the conversion of UDP-4-keto-arabinose (UDP-Ara4O) to UDP-4-amino-4-deoxy-L-arabinose (UDP-L-Ara4N). The modified arabinose is attached to lipid A and is required for resistance to polymyxin and cationic antimicrobial peptides. The polypeptide is UDP-4-amino-4-deoxy-L-arabinose--oxoglutarate aminotransferase (Klebsiella pneumoniae (strain 342)).